The following is a 444-amino-acid chain: Sprouty-related, EVH1 domain-containing protein 1 (444 aa).

S2 bears the N-acetylserine mark. One can recognise a WH1 domain in the interval 6–123 (ATSDNDNSYA…RGIRRAIEDI (118 aa)). The tract at residues 123–151 (ISQGCPESKNEAEGADDLQANEEDSSSSL) is disordered. Positions 135 to 147 (EGADDLQANEEDS) are enriched in acidic residues. K224 carries the post-translational modification N6-methyllysine. The KBD domain maps to 233-285 (SIRHVSFQDEDEIVRINPRDILIRRYADYRHPDMWKNDLERDDADSSIQFSKP). Residues S238 and S308 each carry the phosphoserine modification. Residues 333–444 (SRCVYCQERF…CCGGKHKAAG (112 aa)) form a required for interaction with TESK1 region. The SPR domain maps to 334–442 (RCVYCQERFN…CGCCGGKHKA (109 aa)).

Homodimer and heterodimer. Able to interact with SPRED2 to form heterodimers. Interacts (via C-terminus) with TAOK1/MARKK (via C-terminus); the interaction does not affect TAOK1 kinase activity. Interacts (via C-terminus) with TESK1 (via C-terminus); the interaction inhibits TESK1 kinase activity. Interacts with CAV1. Interacts with RAS. Interacts with palmitoyltransferase ZDHHC17/HIP14; the interaction leads to palmitoylation of SPRED1. In terms of processing, palmitoylated by ZDHHC17/HIP14. Phosphorylated on tyrosine. Post-translationally, ubiquitinated. As to expression, weakly expressed in embryonic cell line HEK293.

The protein localises to the cell membrane. It localises to the membrane. It is found in the caveola. Its subcellular location is the nucleus. In terms of biological role, tyrosine kinase substrate that inhibits growth-factor-mediated activation of MAP kinase. Negatively regulates hematopoiesis of bone marrow. Inhibits fibroblast growth factor (FGF)-induced retinal lens fiber differentiation, probably by inhibiting FGF-mediated phosphorylation of ERK1/2. Attenuates actin stress fiber formation via inhibition of TESK1-mediated phosphorylation of cofilin. Inhibits TGFB-induced epithelial-to-mesenchymal transition in lens epithelial cells. The chain is Sprouty-related, EVH1 domain-containing protein 1 (SPRED1) from Homo sapiens (Human).